Reading from the N-terminus, the 357-residue chain is Actin, macronuclear (357 aa).

This sequence belongs to the actin family. Met-1 may be removed after translation.

Its subcellular location is the cytoplasm. It localises to the cytoskeleton. It carries out the reaction ATP + H2O = ADP + phosphate + H(+). Its function is as follows. Actins are highly conserved proteins that are involved in various types of cell motility and are ubiquitously expressed in all eukaryotic cells. The polypeptide is Actin, macronuclear (Oxytricha fallax).